Reading from the N-terminus, the 439-residue chain is Adenylosuccinate synthetase (439 aa).

GTP contacts are provided by residues 14-20 (GDEGKGK) and 42-44 (GHT). Asp15 acts as the Proton acceptor in catalysis. Positions 15 and 42 each coordinate Mg(2+). Residues 15 to 18 (DEGK), 40 to 43 (NAGH), Thr130, Arg144, Gln225, Thr240, and Arg304 each bind IMP. His43 acts as the Proton donor in catalysis. Substrate is bound at residue 300–306 (TTTGRRR). GTP is bound by residues Arg306, 332–334 (KLD), and 414–416 (SLG).

This sequence belongs to the adenylosuccinate synthetase family. In terms of assembly, homodimer. It depends on Mg(2+) as a cofactor.

The protein resides in the cytoplasm. The catalysed reaction is IMP + L-aspartate + GTP = N(6)-(1,2-dicarboxyethyl)-AMP + GDP + phosphate + 2 H(+). Its pathway is purine metabolism; AMP biosynthesis via de novo pathway; AMP from IMP: step 1/2. Plays an important role in the de novo pathway of purine nucleotide biosynthesis. Catalyzes the first committed step in the biosynthesis of AMP from IMP. This chain is Adenylosuccinate synthetase, found in Prochlorococcus marinus (strain MIT 9303).